The sequence spans 215 residues: Kunitz trypsin inhibitor 2 (215 aa).

The signal sequence occupies residues 1-23 (MKNPSVISFLIILLFAATICTHG). A disulfide bridge connects residues Cys67 and Cys114. Asn145 carries an N-linked (GlcNAc...) asparagine glycan.

The protein belongs to the protease inhibitor I3 (leguminous Kunitz-type inhibitor) family. In terms of assembly, interacts with RD21A. Interacts with RD21B and RD21C. Expressed in vascular bundles of the carpels, the transmitting tract of the style and septum epidermis. Expressed in etiolated seedlings.

It localises to the secreted. It is found in the cell wall. Its subcellular location is the extracellular space. The protein resides in the apoplast. The protein localises to the endoplasmic reticulum. Water-soluble and chlorophyll-binding protein that probably does not function as a chloroplast chlorophyll carrier and is not involved in photosynthesis. Involved in the control of cell death in the transmitting tract and septum epidermis during flower development. Binds and inhibits the activity of the cysteine protease RD21A as a pro-death protein. May play a role in herbivore resistance activation during seedling greening. The chain is Kunitz trypsin inhibitor 2 from Arabidopsis thaliana (Mouse-ear cress).